The following is a 341-amino-acid chain: Myb-related transcription factor, partner of profilin (341 aa).

The region spanning 8–80 is the Myb-like domain; it reads VTRLRKPRFS…EVQKRWNDFK (73 aa). Disordered stretches follow at residues 84–103, 180–210, and 309–341; these read KEKL…EEAM, LPHL…PSGV, and AEPP…WKNL. A compositionally biased stretch (pro residues) spans 184-200; sequence TPSPDPSECPSPPPPGS. The segment covering 321–341 has biased composition (basic residues); that stretch reads NKRKRFGYLSQRKRRGRWKNL.

Its subcellular location is the nucleus. Functionally, transcriptional repressor; DNA-binding protein that specifically recognizes the core sequence 5'-YAAC[GT]G-3'. The polypeptide is Myb-related transcription factor, partner of profilin (mypop) (Xenopus laevis (African clawed frog)).